The sequence spans 215 residues: Probable GTP-binding protein EngB (215 aa).

Positions 31 to 215 (GPPEIAFAGR…RAAILQAIAV (185 aa)) constitute an EngB-type G domain. GTP-binding positions include 39-46 (GRSNVGKS), 66-70 (GRTQE), 93-96 (DMPG), 160-163 (TKSD), and 194-196 (TSS). Residues S46 and T68 each coordinate Mg(2+).

Belongs to the TRAFAC class TrmE-Era-EngA-EngB-Septin-like GTPase superfamily. EngB GTPase family. Requires Mg(2+) as cofactor.

Its function is as follows. Necessary for normal cell division and for the maintenance of normal septation. The chain is Probable GTP-binding protein EngB from Bartonella quintana (strain Toulouse) (Rochalimaea quintana).